Here is a 559-residue protein sequence, read N- to C-terminus: Glucosylglycerate phosphorylase (559 aa).

Residue aspartate 229 is the Nucleophile of the active site.

It belongs to the glycosyl hydrolase 13 family. Glucosylglycerate phosphorylase subfamily.

It catalyses the reaction (2R)-2-O-(alpha-D-glucopyranosyl)-glycerate + phosphate = (R)-glycerate + alpha-D-glucose 1-phosphate. In terms of biological role, catalyzes the reversible phosphorolysis of glucosylglycerate into alpha-D-glucose 1-phosphate (Glc1P) and D-glycerate (also called (R)-glycerate). May be a regulator of intracellular levels of glucosylglycerate, a compatible solute that primarily protects organisms facing salt stress and very specific nutritional constraints. Cannot catalyze the phosphorolysis of sucrose. Does not act on other sugars such as alpha-D-galactose 1-phosphate, alpha-D-mannose 1-phosphate or beta-D-glucose 1-phosphate; in vitro D-erythronate can substitute for D-glycerate with a much lower efficiency. This is Glucosylglycerate phosphorylase (ycjM) from Escherichia coli (strain K12).